We begin with the raw amino-acid sequence, 314 residues long: tRNA dimethylallyltransferase (314 aa).

10–17 (GPTGVGKT) is an ATP binding site. 12-17 (TGVGKT) contacts substrate. The interval 35-38 (DSMQ) is interaction with substrate tRNA.

The protein belongs to the IPP transferase family. Monomer. Requires Mg(2+) as cofactor.

The enzyme catalyses adenosine(37) in tRNA + dimethylallyl diphosphate = N(6)-dimethylallyladenosine(37) in tRNA + diphosphate. Its function is as follows. Catalyzes the transfer of a dimethylallyl group onto the adenine at position 37 in tRNAs that read codons beginning with uridine, leading to the formation of N6-(dimethylallyl)adenosine (i(6)A). The polypeptide is tRNA dimethylallyltransferase (Finegoldia magna (strain ATCC 29328 / DSM 20472 / WAL 2508) (Peptostreptococcus magnus)).